A 149-amino-acid polypeptide reads, in one-letter code: UPF0178 protein lwe1471 (149 aa).

Belongs to the UPF0178 family.

This Listeria welshimeri serovar 6b (strain ATCC 35897 / DSM 20650 / CCUG 15529 / CIP 8149 / NCTC 11857 / SLCC 5334 / V8) protein is UPF0178 protein lwe1471.